Reading from the N-terminus, the 243-residue chain is Protein VERNALIZATION 1 (243 aa).

An MADS-box domain is found at 1–61 (MGRGKVQLKR…GKLYEFATDS (61 aa)). One can recognise a K-box domain in the interval 88 to 178 (QGNWCHEYRK…QKELVEKQKA (91 aa)). Positions 122-178 (LKELQQLEQQLESSLKHIRSRKNQLMHESISELQRKERSLQEENKALQKELVEKQKA) form a coiled coil. Residues 173 to 243 (VEKQKAHTQQ…PPWMVSHISG (71 aa)) are disordered. Positions 179 to 192 (HTQQAQWEQTHPQT) are enriched in polar residues.

It is found in the nucleus. Component of a grass-specific mechanism of vernalization, a process by which prolonged cold exposure provides competence to flower in daylengths longer than 12 hours. Involved in the exit of vernalization and confers flowering competency at the expense of freezing tolerance, probably by promoting the expression of VRN3; this process is essential in cv. Bd29-1 for flowering but seems do not occur in cv. Bd21. This chain is Protein VERNALIZATION 1, found in Brachypodium distachyon (Purple false brome).